The primary structure comprises 276 residues: Acyl-[acyl-carrier-protein]--UDP-N-acetylglucosamine O-acyltransferase (276 aa).

This sequence belongs to the transferase hexapeptide repeat family. LpxA subfamily. As to quaternary structure, homotrimer.

It localises to the cytoplasm. It carries out the reaction a (3R)-hydroxyacyl-[ACP] + UDP-N-acetyl-alpha-D-glucosamine = a UDP-3-O-[(3R)-3-hydroxyacyl]-N-acetyl-alpha-D-glucosamine + holo-[ACP]. Its pathway is glycolipid biosynthesis; lipid IV(A) biosynthesis; lipid IV(A) from (3R)-3-hydroxytetradecanoyl-[acyl-carrier-protein] and UDP-N-acetyl-alpha-D-glucosamine: step 1/6. In terms of biological role, involved in the biosynthesis of lipid A, a phosphorylated glycolipid that anchors the lipopolysaccharide to the outer membrane of the cell. In Rippkaea orientalis (strain PCC 8801 / RF-1) (Cyanothece sp. (strain PCC 8801)), this protein is Acyl-[acyl-carrier-protein]--UDP-N-acetylglucosamine O-acyltransferase.